The primary structure comprises 573 residues: Membrane protein insertase YidC (573 aa).

Residues 6–26 (VFLIFAWLMVAALLWMEWGKD) form a helical membrane-spanning segment. The disordered stretch occupies residues 63–82 (PQAGSPAAVPATSTTTATPA). 5 helical membrane passes run 355-375 (FSIM…LHSF), 379-399 (WGWA…PLSA), 446-466 (GGCL…WVLV), 488-508 (PYFI…KLTP), and 524-544 (PLVF…YWVV).

This sequence belongs to the OXA1/ALB3/YidC family. Type 1 subfamily. In terms of assembly, interacts with the Sec translocase complex via SecD. Specifically interacts with transmembrane segments of nascent integral membrane proteins during membrane integration.

Its subcellular location is the cell inner membrane. Required for the insertion and/or proper folding and/or complex formation of integral membrane proteins into the membrane. Involved in integration of membrane proteins that insert both dependently and independently of the Sec translocase complex, as well as at least some lipoproteins. Aids folding of multispanning membrane proteins. This chain is Membrane protein insertase YidC, found in Xanthomonas campestris pv. campestris (strain 8004).